A 227-amino-acid polypeptide reads, in one-letter code: Lipoprotein-releasing system ATP-binding protein LolD (227 aa).

In terms of domain architecture, ABC transporter spans 6 to 227 (LEMRGITKSY…RLDAGQLSDV (222 aa)). 43 to 50 (APSGAGKS) contributes to the ATP binding site.

Belongs to the ABC transporter superfamily. Lipoprotein translocase (TC 3.A.1.125) family. The complex is composed of two ATP-binding proteins (LolD) and two transmembrane proteins (LolC and LolE).

It localises to the cell inner membrane. Part of the ABC transporter complex LolCDE involved in the translocation of mature outer membrane-directed lipoproteins, from the inner membrane to the periplasmic chaperone, LolA. Responsible for the formation of the LolA-lipoprotein complex in an ATP-dependent manner. The sequence is that of Lipoprotein-releasing system ATP-binding protein LolD from Roseobacter denitrificans (strain ATCC 33942 / OCh 114) (Erythrobacter sp. (strain OCh 114)).